A 337-amino-acid chain; its full sequence is Exopolysaccharide phosphotransferase cps2G (337 aa).

This sequence belongs to the stealth family.

The sequence is that of Exopolysaccharide phosphotransferase cps2G (cps2G) from Lactiplantibacillus plantarum (strain ATCC BAA-793 / NCIMB 8826 / WCFS1) (Lactobacillus plantarum).